A 333-amino-acid polypeptide reads, in one-letter code: Ketol-acid reductoisomerase (NADP(+)) (333 aa).

The region spanning 1–179 is the KARI N-terminal Rossmann domain; it reads MFYDDDADLS…GGTRAGVIKT (179 aa). Residues 22 to 25, Lys45, Ser48, Ser50, and 80 to 83 each bind NADP(+); these read YGSQ and DTAQ. The active site involves His105. Residue Gly131 participates in NADP(+) binding. In terms of domain architecture, KARI C-terminal knotted spans 180–325; sequence TFKDETETDL…KKLRDLMSWV (146 aa). 4 residues coordinate Mg(2+): Asp188, Glu192, Glu224, and Glu228. Ser249 serves as a coordination point for substrate.

The protein belongs to the ketol-acid reductoisomerase family. Mg(2+) is required as a cofactor.

The enzyme catalyses (2R)-2,3-dihydroxy-3-methylbutanoate + NADP(+) = (2S)-2-acetolactate + NADPH + H(+). It carries out the reaction (2R,3R)-2,3-dihydroxy-3-methylpentanoate + NADP(+) = (S)-2-ethyl-2-hydroxy-3-oxobutanoate + NADPH + H(+). The protein operates within amino-acid biosynthesis; L-isoleucine biosynthesis; L-isoleucine from 2-oxobutanoate: step 2/4. It participates in amino-acid biosynthesis; L-valine biosynthesis; L-valine from pyruvate: step 2/4. Its function is as follows. Involved in the biosynthesis of branched-chain amino acids (BCAA). Catalyzes an alkyl-migration followed by a ketol-acid reduction of (S)-2-acetolactate (S2AL) to yield (R)-2,3-dihydroxy-isovalerate. In the isomerase reaction, S2AL is rearranged via a Mg-dependent methyl migration to produce 3-hydroxy-3-methyl-2-ketobutyrate (HMKB). In the reductase reaction, this 2-ketoacid undergoes a metal-dependent reduction by NADPH to yield (R)-2,3-dihydroxy-isovalerate. In Mycobacterium ulcerans (strain Agy99), this protein is Ketol-acid reductoisomerase (NADP(+)).